We begin with the raw amino-acid sequence, 118 residues long: Large ribosomal subunit protein bL19 (118 aa).

The protein belongs to the bacterial ribosomal protein bL19 family.

Functionally, this protein is located at the 30S-50S ribosomal subunit interface and may play a role in the structure and function of the aminoacyl-tRNA binding site. The chain is Large ribosomal subunit protein bL19 from Salinispora tropica (strain ATCC BAA-916 / DSM 44818 / JCM 13857 / NBRC 105044 / CNB-440).